A 495-amino-acid chain; its full sequence is Ribose import ATP-binding protein RbsA (495 aa).

ABC transporter domains follow at residues 7-242 and 250-491; these read LEMR…VGRP and ERDI…TGVN. 39-46 contacts ATP; sequence GENGAGKS.

It belongs to the ABC transporter superfamily. Ribose importer (TC 3.A.1.2.1) family. As to quaternary structure, the complex is composed of an ATP-binding protein (RbsA), two transmembrane proteins (RbsC) and a solute-binding protein (RbsB).

The protein resides in the cell inner membrane. The catalysed reaction is D-ribose(out) + ATP + H2O = D-ribose(in) + ADP + phosphate + H(+). Functionally, part of the ABC transporter complex RbsABC involved in ribose import. Responsible for energy coupling to the transport system. In Shigella dysenteriae serotype 1 (strain Sd197), this protein is Ribose import ATP-binding protein RbsA.